The sequence spans 89 residues: OMEGA-ectatommitoxin(02)-Rm1a (89 aa).

An N-terminal signal peptide occupies residues 1–30 (MKDSYISIVIAYLMVTFILVSSMPIEGEKG). 3 disulfides stabilise this stretch: C39–C52, C47–C68, and C70–C79. Positions 43 to 80 (YANYCFNGKCVHVVAQDEPGKPCYSCICDKFYIGKRCG) constitute an EGF-like domain.

The protein belongs to the EGF domain peptide family. In terms of tissue distribution, expressed by the venom gland.

The protein resides in the secreted. Ant peptide with probable defensive activity which acts as a potent agonist of the mammalian epidermal growth factor receptor (EGFR). Mimics, both structurally and functionally, vertebrate epidermal growth factor (EGF) peptide hormones. In vivo, intraplantar injection in mice causes long-lasting (several days) hypersensitivity of the injected paw to both mechanical and thermal stimuli. Its long-lasting effect is unusual for venom toxins whose effects are usually immediate. One possible explanation is that it would reduce the duration of a nest attack, discourage future attacks, or enhance the actions of subsequent exposure to other pain-inducing venom peptides. The protein is OMEGA-ectatommitoxin(02)-Rm1a of Rhytidoponera metallica (Australian green-headed ant).